The primary structure comprises 401 residues: NALCN channel auxiliary factor 2 (401 aa).

The chain crosses the membrane as a helical span at residues 42–62 (LASLLFFTALLSDHLWLCAGG). Residues asparagine 77, asparagine 97, asparagine 153, and asparagine 178 are each glycosylated (N-linked (GlcNAc...) asparagine). Residues 362-382 (LCVLVLFLLHTFISITTLQHC) form a helical membrane-spanning segment.

Belongs to the NALF family.

Its subcellular location is the membrane. Probable component of the NALCN channel complex, a channel that regulates the resting membrane potential and controls neuronal excitability. The protein is NALCN channel auxiliary factor 2 (nalf2) of Danio rerio (Zebrafish).